Reading from the N-terminus, the 579-residue chain is Transcription factor MTB2 (579 aa).

A disordered region spans residues 373-439 (GGMQIDFTNS…PLNHVEAERQ (67 aa)). Over residues 382-392 (SRPVVSPVPTV) the composition is skewed to low complexity. 2 stretches are compositionally biased toward basic and acidic residues: residues 393–415 (ESEH…DERR) and 425–439 (NGRE…AERQ). The tract at residues 428 to 441 (EEPLNHVEAERQRR) is basic motif; degenerate. Residues 428 to 477 (EEPLNHVEAERQRREKLNQRFYALRAVVPNISKMDKASLLGDAIAHITDM) enclose the bHLH domain. The interval 442–477 (EKLNQRFYALRAVVPNISKMDKASLLGDAIAHITDM) is helix-loop-helix motif.

Its subcellular location is the nucleus. In terms of biological role, transcription factor that negatively regulates jasmonate (JA) signaling. Negatively regulates JA-dependent response to wounding, JA-induced expression of defense genes, JA-dependent responses against herbivorous insects, and JA-dependent resistance against Botrytis cinerea infection. Plays a positive role in resistance against the bacterial pathogen Pseudomonas syringae pv tomato DC3000. In Solanum lycopersicum (Tomato), this protein is Transcription factor MTB2.